A 392-amino-acid polypeptide reads, in one-letter code: Proteasome-activating nucleotidase (392 aa).

Positions 19 to 53 (IVRLLEEKIESLTKELEKLRQDLNWYKGELEKLLA) form a coiled coil. Residues 178-183 (GTGKTL) and tyrosine 317 contribute to the ATP site. Positions 390 to 392 (KYV) are docks into pockets in the proteasome alpha-ring to cause gate opening.

It belongs to the AAA ATPase family. As to quaternary structure, homohexamer. The hexameric complex has a two-ring architecture resembling a top hat that caps the 20S proteasome core at one or both ends. Upon ATP-binding, the C-terminus of PAN interacts with the alpha-rings of the proteasome core by binding to the intersubunit pockets.

Its subcellular location is the cytoplasm. Functionally, ATPase which is responsible for recognizing, binding, unfolding and translocation of substrate proteins into the archaeal 20S proteasome core particle. Is essential for opening the gate of the 20S proteasome via an interaction with its C-terminus, thereby allowing substrate entry and access to the site of proteolysis. Thus, the C-termini of the proteasomal ATPase function like a 'key in a lock' to induce gate opening and therefore regulate proteolysis. Unfolding activity requires energy from ATP hydrolysis, whereas ATP binding alone promotes ATPase-20S proteasome association which triggers gate opening, and supports translocation of unfolded substrates. This Sulfurisphaera tokodaii (strain DSM 16993 / JCM 10545 / NBRC 100140 / 7) (Sulfolobus tokodaii) protein is Proteasome-activating nucleotidase.